The primary structure comprises 83 residues: Small ribosomal subunit protein bS16 (83 aa).

Belongs to the bacterial ribosomal protein bS16 family.

This chain is Small ribosomal subunit protein bS16, found in Acinetobacter baumannii (strain AB307-0294).